The following is a 308-amino-acid chain: Zinc transporter ZIP9 (308 aa).

The helical transmembrane segment at 4-24 threads the bilayer; the sequence is FLSISLLSVAMLVGCYVAGII. An N-linked (GlcNAc...) asparagine glycan is attached at Asn29. The next 5 helical transmembrane spans lie at 35–55, 107–127, 147–167, 177–197, and 211–231; these read LKLVTVLGAGLLCGTALAVIV, AYIGVSLVLGFVFMLLVDQIG, ITTTLGLVVHAAADGVALGAA, LIVFVAIMLHKAPAAFGLVSF, and HLLVFALAAPAMSMLTYLGLS. Asn242 carries N-linked (GlcNAc...) asparagine glycosylation. 2 helical membrane passes run 245 to 265 and 287 to 307; these read GVAMLFSAGTFLYVATVHVLP and LEVAALVLGCLIPLILSIGHQ.

This sequence belongs to the ZIP transporter (TC 2.A.5) family.

It is found in the golgi apparatus. The protein localises to the trans-Golgi network membrane. It localises to the cell membrane. Its subcellular location is the cytoplasm. The protein resides in the perinuclear region. It is found in the mitochondrion. The protein localises to the nucleus. The enzyme catalyses Zn(2+)(in) = Zn(2+)(out). In terms of biological role, transports zinc ions across cell and organelle membranes into the cytoplasm and regulates intracellular zinc homeostasis. Participates in the zinc ions efflux out of the secretory compartments. Regulates intracellular zinc level, resulting in the enhancement of AKT1 and MAPK3/MAPK1 (Erk1/2) phosphorylation in response to the BCR activation. Also functions as a membrane androgen receptor that mediates, through a G protein, the non-classical androgen signaling pathway, characterized by the activation of MAPK3/MAPK1 (Erk1/2) and transcription factors CREB1 or ATF1. This pathway contributes to CLDN1 and CLDN5 expression and tight junction formation between adjacent Sertoli cells. Mediates androgen-induced vascular endothelial cell proliferation through activation of an inhibitory G protein leading to the AKT1 and MAPK3/MAPK1 (Erk1/2) activation which in turn modulate inhibition (phosphorylation) of GSK3B and CCND1 transcription. Moreover, has dual functions as a membrane-bound androgen receptor and as an androgen-dependent zinc transporter both of which are mediated through an inhibitory G protein (Gi) that mediates both MAP kinase and zinc signaling leading to the androgen-dependent apoptotic process. The protein is Zinc transporter ZIP9 of Mus musculus (Mouse).